A 512-amino-acid polypeptide reads, in one-letter code: Cytochrome P450 71BT1 (512 aa).

A signal peptide spans 1 to 24; that stretch reads MENLFIFLFALLLFCFMLLKLSKK. N-linked (GlcNAc...) asparagine glycosylation is found at N111 and N168. C447 lines the heme pocket.

It belongs to the cytochrome P450 family.

This is Cytochrome P450 71BT1 from Catharanthus roseus (Madagascar periwinkle).